The sequence spans 228 residues: L-ribulose-5-phosphate 4-epimerase UlaF (228 aa).

Substrate contacts are provided by residues 26–27, 43–44, and 72–73; these read GN, SG, and SS. Residues D74, H93, and H95 each contribute to the Zn(2+) site. The Proton donor/acceptor role is filled by D118. Residue H167 coordinates Zn(2+). The active-site Proton donor/acceptor is the Y225.

This sequence belongs to the aldolase class II family. AraD/FucA subfamily. Zn(2+) serves as cofactor.

It carries out the reaction L-ribulose 5-phosphate = D-xylulose 5-phosphate. Its pathway is cofactor degradation; L-ascorbate degradation; D-xylulose 5-phosphate from L-ascorbate: step 4/4. Catalyzes the isomerization of L-ribulose 5-phosphate to D-xylulose 5-phosphate. Is involved in the anaerobic L-ascorbate utilization. The polypeptide is L-ribulose-5-phosphate 4-epimerase UlaF (Escherichia coli O6:K15:H31 (strain 536 / UPEC)).